The chain runs to 593 residues: Developmental and secondary metabolism regulator VEL1 (593 aa).

A compositionally biased stretch (polar residues) spans methionine 1–arginine 16. The segment at methionine 1–glycine 21 is disordered. The region spanning glycine 21–arginine 212 is the Velvet domain. Residues glutamate 35–cysteine 40 carry the Nuclear localization signal motif. A disordered region spans residues arginine 218–methionine 569. The span at proline 310–proline 326 shows a compositional bias: low complexity. Positions glutamine 327 to histidine 340 are enriched in pro residues. Composition is skewed to low complexity over residues serine 341–glutamine 360 and glutamine 367–tyrosine 389. 2 stretches are compositionally biased toward polar residues: residues serine 413 to proline 429 and glycine 440 to leucine 449. Residues glutamine 443 to proline 487 are PEST. The span at histidine 450–serine 465 shows a compositional bias: low complexity. Polar residues-rich tracts occupy residues proline 482 to histidine 505 and asparagine 512 to phenylalanine 534.

Belongs to the velvet family. VeA subfamily. As to quaternary structure, component of the heterotrimeric velvet complex composed of LAE1, VEL1 and VEL2; VEL1 acting as a bridging protein between LAE1 and VEL2.

It is found in the nucleus. The protein localises to the cytoplasm. In terms of biological role, component of the velvet transcription factor complex that controls sexual/asexual developmental ratio in response to light, promoting sexual development in the darkness while stimulating asexual sporulation under illumination. The velvet complex acts as a global regulator for secondary metabolite gene expression. Controls the expression of the T-toxin gene cluster. Promotes oxidative stress tolerance and acts as a virulence factors during infection. Negatively regulate mycelial pigmentation and controls sexual development, as well as asexual development during vegetative growth. The chain is Developmental and secondary metabolism regulator VEL1 from Cochliobolus heterostrophus (strain C5 / ATCC 48332 / race O) (Southern corn leaf blight fungus).